Reading from the N-terminus, the 229-residue chain is Ribosome maturation factor RimM (229 aa).

The region spanning 148–229 is the PRC barrel domain; sequence ADEFYWVDLI…RVVVDWEADY (82 aa).

It belongs to the RimM family. Binds ribosomal protein uS19.

It is found in the cytoplasm. Its function is as follows. An accessory protein needed during the final step in the assembly of 30S ribosomal subunit, possibly for assembly of the head region. Essential for efficient processing of 16S rRNA. May be needed both before and after RbfA during the maturation of 16S rRNA. It has affinity for free ribosomal 30S subunits but not for 70S ribosomes. The protein is Ribosome maturation factor RimM of Burkholderia pseudomallei (strain 1710b).